Consider the following 539-residue polypeptide: MHNINHLLNTLTDYGIHNTGKIFYNPSYSILFQEETRDTLVGFERGTVTKLGAVAVDTGIFTGRSPKDKYIVRDDITRDTFWWADQGKNKSDNHPITQAIWNELKTCVTQQLSNKPLFVVDAFCGAHSNSRLQVRFITEVAWQAHFVKNMFIRPSEEELTRFHPDFVVMNGAKCTNPNWKEQGLHSKNFVAFNLTERIQLIGGTWYGGEMKKGLFSMMNYFLPLKRIAAMHCSANVGVKGDVAVFFGLSGTGKTTLSADPKRQLIGDDEHGWDDEGVFNFEGGCYAKTIELSESDEPDIYHAIKRDALLENVVVLPDATVDFNDSSKTQNTRVSYPIYHIQNIVQPVSKAGHAKKIIFLTADAFGVLPPVVHLTLEQTQYHFLSGFTSKLAGTELGITSPVPTFSACFGEAFLSLHPTQYAEVLLQRMQAAQAKAYLVNTGWNGMGHRISIKNTRAIIEAILHEKIDHVPTFNLPIFNLSVPTEIEGVNSEILDPRASYSEVKEWQHKAENLARRFIKNFEQYSDTAVGALLLKSGPEL.

Substrate contacts are provided by R64, Y206, and K212. ATP is bound by residues K212, H231, and G247–T255. Mn(2+) contacts are provided by K212 and H231. D268 contributes to the Mn(2+) binding site. ATP contacts are provided by residues E296, R332, R448–I449, and T454. Substrate is bound at residue R332.

This sequence belongs to the phosphoenolpyruvate carboxykinase (ATP) family. As to quaternary structure, monomer. It depends on Mn(2+) as a cofactor.

It localises to the cytoplasm. It catalyses the reaction oxaloacetate + ATP = phosphoenolpyruvate + ADP + CO2. The protein operates within carbohydrate biosynthesis; gluconeogenesis. In terms of biological role, involved in the gluconeogenesis. Catalyzes the conversion of oxaloacetate (OAA) to phosphoenolpyruvate (PEP) through direct phosphoryl transfer between the nucleoside triphosphate and OAA. This is Phosphoenolpyruvate carboxykinase (ATP) from Hamiltonella defensa subsp. Acyrthosiphon pisum (strain 5AT).